Here is a 355-residue protein sequence, read N- to C-terminus: UDP-N-acetylglucosamine--N-acetylmuramyl-(pentapeptide) pyrophosphoryl-undecaprenol N-acetylglucosamine transferase (355 aa).

Residues T15–G17, N127, R163, S191, I244, A263–E268, and Q288 each bind UDP-N-acetyl-alpha-D-glucosamine.

This sequence belongs to the glycosyltransferase 28 family. MurG subfamily.

Its subcellular location is the cell inner membrane. The enzyme catalyses di-trans,octa-cis-undecaprenyl diphospho-N-acetyl-alpha-D-muramoyl-L-alanyl-D-glutamyl-meso-2,6-diaminopimeloyl-D-alanyl-D-alanine + UDP-N-acetyl-alpha-D-glucosamine = di-trans,octa-cis-undecaprenyl diphospho-[N-acetyl-alpha-D-glucosaminyl-(1-&gt;4)]-N-acetyl-alpha-D-muramoyl-L-alanyl-D-glutamyl-meso-2,6-diaminopimeloyl-D-alanyl-D-alanine + UDP + H(+). The protein operates within cell wall biogenesis; peptidoglycan biosynthesis. Cell wall formation. Catalyzes the transfer of a GlcNAc subunit on undecaprenyl-pyrophosphoryl-MurNAc-pentapeptide (lipid intermediate I) to form undecaprenyl-pyrophosphoryl-MurNAc-(pentapeptide)GlcNAc (lipid intermediate II). The polypeptide is UDP-N-acetylglucosamine--N-acetylmuramyl-(pentapeptide) pyrophosphoryl-undecaprenol N-acetylglucosamine transferase (Photorhabdus laumondii subsp. laumondii (strain DSM 15139 / CIP 105565 / TT01) (Photorhabdus luminescens subsp. laumondii)).